Consider the following 66-residue polypeptide: Alpha-conotoxin GIB (66 aa).

Positions 1-21 (MGMRMMFTVFLLVVLATTVVS) are cleaved as a signal peptide. Positions 22-49 (FPSERASDGRDDTAKDEGSDMEKLVEKK) are excised as a propeptide. Cystine bridges form between Cys51-Cys56 and Cys52-Cys62. Residue Gly64 is modified to Glycine amide.

It belongs to the conotoxin A superfamily. In terms of tissue distribution, expressed by the venom duct.

It is found in the secreted. Its function is as follows. Alpha-conotoxins act on postsynaptic membranes, they bind to the nicotinic acetylcholine receptors (nAChR) and thus inhibit them. Both the globular (with C1-C3; C2-C4 disulfide pattern) and ribbon (C1-C4; C2-C3) isomers reversibly inhibit human muscle-type alpha-1-beta-1-delta-epsilon/CHRNA1-CHRNB1-CHRND-CHRNE nAChRs (IC(50)=116 nM and IC(50)=643 nM, respectively). Both isomers also inhibit alpha-7/CHRNA7 and alpha-9-alpha-10/CHRNA9-CHRNA10 (IC(50)=1113 nM by globular isomer) nAChRs. The chain is Alpha-conotoxin GIB from Conus geographus (Geography cone).